Consider the following 704-residue polypeptide: Polyribonucleotide nucleotidyltransferase (704 aa).

Mg(2+) is bound by residues Asp-486 and Asp-492. One can recognise a KH domain in the interval 553-612 (PRIYTMKINPEKIKDVIGKGGSVIRALTDETGTTIEIEDDGTIKIAATDGDKAKHAIRRI). The 69-residue stretch at 622-690 (GRIYAGKVTR…RQGRIRLSIK (69 aa)) folds into the S1 motif domain.

It belongs to the polyribonucleotide nucleotidyltransferase family. Component of the RNA degradosome, which is a multiprotein complex involved in RNA processing and mRNA degradation. Mg(2+) serves as cofactor.

Its subcellular location is the cytoplasm. The enzyme catalyses RNA(n+1) + phosphate = RNA(n) + a ribonucleoside 5'-diphosphate. Its function is as follows. Involved in mRNA degradation. Catalyzes the phosphorolysis of single-stranded polyribonucleotides processively in the 3'- to 5'-direction. In Yersinia pseudotuberculosis serotype IB (strain PB1/+), this protein is Polyribonucleotide nucleotidyltransferase.